The following is a 473-amino-acid chain: NADH-quinone oxidoreductase subunit N (473 aa).

14 helical membrane passes run 3–23, 30–50, 62–82, 99–119, 120–140, 153–173, 195–215, 230–252, 262–282, 291–311, 326–346, 368–388, 408–428, and 444–464; these read LHYLPAIIISIAILVLLLVIA, LAFYITGTGLCIACVSQCSLL, FSSMSGVLSVLLLGILIFLWL, FYLLLLLASLGALGMIVSEHF, ASFFLTLELMSLSFVGLIAYS, YLILSAVASAFMLMGIAIVYL, MLFTAGLIFILIGLLFKLSLV, LPTTALLSTVSKLASFVVLWKLF, IVLTLIGVVAVASMLIGNLLA, ILAFSSISHFGYLLILLFLFN, ALLFYLSAYLITLTGAFSILM, AASLSIVMLSLAGIPLTLGFM, FLVIASVIGLFFYLRVIMVML, and VASLWFIILLIMGLGTFPALF.

This sequence belongs to the complex I subunit 2 family. NDH-1 is composed of 13 different subunits. Subunits NuoA, H, J, K, L, M, N constitute the membrane sector of the complex.

It is found in the cell inner membrane. It carries out the reaction a quinone + NADH + 5 H(+)(in) = a quinol + NAD(+) + 4 H(+)(out). In terms of biological role, NDH-1 shuttles electrons from NADH, via FMN and iron-sulfur (Fe-S) centers, to quinones in the respiratory chain. The immediate electron acceptor for the enzyme in this species is believed to be ubiquinone. Couples the redox reaction to proton translocation (for every two electrons transferred, four hydrogen ions are translocated across the cytoplasmic membrane), and thus conserves the redox energy in a proton gradient. The protein is NADH-quinone oxidoreductase subunit N of Shewanella woodyi (strain ATCC 51908 / MS32).